Reading from the N-terminus, the 106-residue chain is ATP-dependent Clp protease adapter protein ClpS (106 aa).

This sequence belongs to the ClpS family. Binds to the N-terminal domain of the chaperone ClpA.

In terms of biological role, involved in the modulation of the specificity of the ClpAP-mediated ATP-dependent protein degradation. The protein is ATP-dependent Clp protease adapter protein ClpS of Sodalis glossinidius (strain morsitans).